A 151-amino-acid polypeptide reads, in one-letter code: Transcriptional regulator MraZ (151 aa).

SpoVT-AbrB domains lie at 5–52 and 81–124; these read ANAI…PLSE and AVDL…DEDA.

It belongs to the MraZ family. As to quaternary structure, forms oligomers.

Its subcellular location is the cytoplasm. The protein localises to the nucleoid. The chain is Transcriptional regulator MraZ from Pseudomonas syringae pv. syringae (strain B728a).